A 429-amino-acid chain; its full sequence is MNLSTFIKKARRWFYDTPDRALEQAYRAALNIQAIELEHFGGKPVSGHNADYSDSVIRYFQGEVRKQLKIIEVRLREFRSFNTVVPVSEETIQKKASNIYYPDAADKPTLIIEKLRFIDEITGRYGRGLSKQSVALVPLNGPEAPQTNGDRPDNKPKVETVSDKTGLVPRSIMRTFSRIQREIDPKSNEAEAEVVTKFRRSRNKTAVSIRFLLTLVIVPLLVHQLAKIAITPFVEEHFFTEASPALFVNSDLENEAFEELEHYRATLEMRQLVGLAPALTEVEITEKIQEKATEIAQDYRAESYNAYENIFSDIFSFFAFVGILLISKREIAMLKGFLDEIVYGLSDSAKAFLIILFTDIFVGYHSPHGWEIILENVAKHFGIAESRDFNFLFIATFPVILDTVLKYWIFRYLNRISPSAVATYRNMNE.

The segment at 139–161 is disordered; it reads LNGPEAPQTNGDRPDNKPKVETV. Over residues 150–161 the composition is skewed to basic and acidic residues; that stretch reads DRPDNKPKVETV. Transmembrane regions (helical) follow at residues 211–231, 306–326, 353–373, and 389–409; these read FLLT…IAIT, AYEN…ILLI, LIIL…WEII, and FNFL…KYWI.

It belongs to the CemA family.

It is found in the cell inner membrane. Functionally, required for H(+) efflux immediately after light irradiation to form a rapid H(+) concentration gradient across the thylakoid membranes. Together with PxcL, contributes to transient H(+) uptake following dark to light transition. In Picosynechococcus sp. (strain ATCC 27264 / PCC 7002 / PR-6) (Agmenellum quadruplicatum), this protein is Proton extrusion protein PxcA.